The following is a 185-amino-acid chain: Threonylcarbamoyl-AMP synthase (185 aa).

In terms of domain architecture, YrdC-like spans 4 to 185; the sequence is SWRVQQAARE…LATGEIVRPG (182 aa).

The protein belongs to the SUA5 family. TsaC subfamily.

It is found in the cytoplasm. The catalysed reaction is L-threonine + hydrogencarbonate + ATP = L-threonylcarbamoyladenylate + diphosphate + H2O. Its function is as follows. Required for the formation of a threonylcarbamoyl group on adenosine at position 37 (t(6)A37) in tRNAs that read codons beginning with adenine. Catalyzes the conversion of L-threonine, HCO(3)(-)/CO(2) and ATP to give threonylcarbamoyl-AMP (TC-AMP) as the acyladenylate intermediate, with the release of diphosphate. This Pseudomonas putida (strain W619) protein is Threonylcarbamoyl-AMP synthase.